We begin with the raw amino-acid sequence, 134 residues long: Cytochrome b5 (134 aa).

Residues 6–82 (TKTFTRAEVA…MKKYKIGELV (77 aa)) enclose the Cytochrome b5 heme-binding domain. Heme-binding residues include His-41 and His-65. The tract at residues 86 to 105 (RTSVAQKSEPTWSTEQQTEE) is disordered. Over residues 87–105 (TSVAQKSEPTWSTEQQTEE) the composition is skewed to polar residues. Residues 111-131 (WLVPLVLCLVATLFYKFFFGG) form a helical membrane-spanning segment.

The protein belongs to the cytochrome b5 family.

The protein localises to the endoplasmic reticulum membrane. It localises to the microsome membrane. Its function is as follows. Cytochrome b5 is a membrane-bound hemoprotein which functions as an electron carrier for several membrane-bound oxygenases. This Drosophila melanogaster (Fruit fly) protein is Cytochrome b5 (Cyt-b5).